The chain runs to 186 residues: Acireductone dioxygenase (186 aa).

His-96, His-98, Glu-102, and His-140 together coordinate Fe(2+). 4 residues coordinate Ni(2+): His-96, His-98, Glu-102, and His-140.

This sequence belongs to the acireductone dioxygenase (ARD) family. Monomer. It depends on Fe(2+) as a cofactor. Ni(2+) is required as a cofactor.

The catalysed reaction is 1,2-dihydroxy-5-(methylsulfanyl)pent-1-en-3-one + O2 = 3-(methylsulfanyl)propanoate + CO + formate + 2 H(+). It catalyses the reaction 1,2-dihydroxy-5-(methylsulfanyl)pent-1-en-3-one + O2 = 4-methylsulfanyl-2-oxobutanoate + formate + 2 H(+). The protein operates within amino-acid biosynthesis; L-methionine biosynthesis via salvage pathway; L-methionine from S-methyl-5-thio-alpha-D-ribose 1-phosphate: step 5/6. Functionally, catalyzes 2 different reactions between oxygen and the acireductone 1,2-dihydroxy-3-keto-5-methylthiopentene (DHK-MTPene) depending upon the metal bound in the active site. Fe-containing acireductone dioxygenase (Fe-ARD) produces formate and 2-keto-4-methylthiobutyrate (KMTB), the alpha-ketoacid precursor of methionine in the methionine recycle pathway. Ni-containing acireductone dioxygenase (Ni-ARD) produces methylthiopropionate, carbon monoxide and formate, and does not lie on the methionine recycle pathway. The protein is Acireductone dioxygenase of Methylococcus capsulatus (strain ATCC 33009 / NCIMB 11132 / Bath).